Here is a 524-residue protein sequence, read N- to C-terminus: Zinc finger protein GLIS2 (524 aa).

Residues 35-174 (ALHRELGLVD…PKQLVCRWAK (140 aa)) are interaction with CTNND1. 2 disordered regions span residues 39–62 (ELGL…FLLN) and 84–114 (SPPS…VPSA). A transcription activation region spans residues 71 to 137 (GRFSAAPLVD…SSFQFFLPLG (67 aa)). Positions 84 to 100 (SPPSGLDSPNGSSSLSP) are enriched in low complexity. Residues 148-171 (SFLTPPKDKCLSPDLPLPKQLVCR) are transcription repression. A C2H2-type 1 zinc finger spans residues 168–193 (LVCRWAKCNQLFELLQDLVDHVNDYH). The C2H2-type 2; atypical zinc-finger motif lies at 202–229 (YCCHWEGCARHGRGFNARYKMLIHIRTH). 3 consecutive C2H2-type zinc fingers follow at residues 235–257 (HRCP…NRSH), 263–287 (YVCP…TRTH), and 293–317 (YYCK…IKAH). Residues 439 to 480 (GGKAEGEKGRGSVPTRALGMEGHKTPLERTESSCSRPSPDGL) form a disordered region. Basic and acidic residues predominate over residues 459–469 (EGHKTPLERTE).

Belongs to the GLI C2H2-type zinc-finger protein family. In terms of assembly, interacts with CTBP1 and HDAC3. Interacts with CTNNB1. Interacts with SUFU. Interacts with CTNND1. In terms of processing, C-terminus cleavage is induced by interaction with CTNND1 and enhanced by Src tyrosine kinase. In terms of tissue distribution, expressed at high levels in kidney and at low levels in heart, lung and placenta. Expressed in colon.

Its subcellular location is the nucleus speckle. It localises to the cytoplasm. Its function is as follows. Can act either as a transcriptional repressor or as a transcriptional activator, depending on the cell context. Acts as a repressor of the Hedgehog signaling pathway. Represses the Hedgehog-dependent expression of Wnt4. Necessary to maintain the differentiated epithelial phenotype in renal cells through the inhibition of SNAI1, which itself induces the epithelial-to-mesenchymal transition. Represses transcriptional activation mediated by CTNNB1 in the Wnt signaling pathway. May act by recruiting the corepressors CTBP1 and HDAC3. May be involved in neuron differentiation. The chain is Zinc finger protein GLIS2 (GLIS2) from Homo sapiens (Human).